A 120-amino-acid polypeptide reads, in one-letter code: Large ribosomal subunit protein eL34x (120 aa).

The disordered stretch occupies residues 31 to 50 (TYQTTNKRASGPKCPVTGKR).

This sequence belongs to the eukaryotic ribosomal protein eL34 family.

The protein is Large ribosomal subunit protein eL34x (RPL34C) of Arabidopsis thaliana (Mouse-ear cress).